We begin with the raw amino-acid sequence, 430 residues long: von Willebrand factor (430 aa).

Residue N6 is glycosylated (N-linked (GlcNAc...) asparagine). A disulfide bond links C9 and C12. T23, T30, and T31 each carry an O-linked (GalNAc...) threonine glycan. C47 and C233 form a disulfide bridge. A VWFA 1; binding site for platelet glycoprotein Ib domain is found at 52-228 (DLVFLLDGSY…DELEQRRDEI (177 aa)). An O-linked (GalNAc...) threonine glycan is attached at T252. The O-linked (GalNAc...) serine glycan is linked to S261. The 158-residue stretch at 273 to 430 (DVVFVLEASD…ITPIFIQDFE (158 aa)) folds into the VWFA 2 domain. N-linked (GlcNAc...) asparagine glycans are attached at residues N290 and N349.

Multimeric. Interacts with F8. Post-translationally, N- and O-glycosylated. In terms of tissue distribution, plasma.

It localises to the secreted. Its subcellular location is the extracellular space. The protein localises to the extracellular matrix. In terms of biological role, important in the maintenance of hemostasis, it promotes adhesion of platelets to the sites of vascular injury by forming a molecular bridge between sub-endothelial collagen matrix and platelet-surface receptor complex GPIb-IX-V. Also acts as a chaperone for coagulation factor VIII, delivering it to the site of injury, stabilizing its heterodimeric structure and protecting it from premature clearance from plasma. The chain is von Willebrand factor from Rattus norvegicus (Rat).